We begin with the raw amino-acid sequence, 406 residues long: Olfactomedin-like protein 3 (406 aa).

The first 21 residues, 1 to 21 (MGPSTPLLILFLLSWSGPLQG), serve as a signal peptide directing secretion. The stretch at 25-101 (HLVEYMERRL…REVDYLETQN (77 aa)) forms a coiled coil. The Olfactomedin-like domain maps to 134-401 (DCGYTISQVR…QIVYKLEMRK (268 aa)). Cys-135 and Cys-328 are oxidised to a cystine. Residues Asn-177 and Asn-248 are each glycosylated (N-linked (GlcNAc...) asparagine).

Belongs to the OLFML3 family. Abundant in placenta, moderate in liver and heart, whereas fairly weak in other tissues examined. On term placenta, mainly localized extracellularly surrounding the syncytiotrophoblastic cells and very rarely expressed in the maternal decidua layer.

It localises to the secreted. Secreted scaffold protein that plays an essential role in dorsoventral patterning during early development. Stabilizes axial formation by restricting chordin (CHRD) activity on the dorsal side. Acts by facilitating the association between the tolloid proteases and their substrate chordin (CHRD), leading to enhance chordin (CHRD) degradation. May have matrix-related function involved in placental and embryonic development, or play a similar role in other physiological processes. The protein is Olfactomedin-like protein 3 (OLFML3) of Homo sapiens (Human).